The sequence spans 501 residues: Aldehyde dehydrogenase 1A1 (501 aa).

Position 2 is an N-acetylserine (Ser-2). N6-acetyllysine occurs at positions 91 and 128. Residues 167-170 (IPWN), 193-196 (KPAE), 226-227 (GP), and 246-247 (GS) each bind NAD(+). N6-acetyllysine is present on Lys-252. The Proton acceptor role is filled by Glu-269. 269–271 (ELG) is a binding site for NAD(+). Cys-303 acts as the Nucleophile in catalysis. Residues 336-501 (LTPGINQGPQ…VAMKISQKNS (166 aa)) are mediates interaction with PRMT3. Thr-337 is subject to Phosphothreonine. 349 to 353 (EQHDK) is an NAD(+) binding site. 2 positions are modified to N6-acetyllysine: Lys-353 and Lys-367. Residue 400-402 (EIF) participates in NAD(+) binding. N6-acetyllysine is present on Lys-410. Ser-413 is modified (phosphoserine). Lys-419, Lys-435, and Lys-495 each carry N6-acetyllysine.

Belongs to the aldehyde dehydrogenase family. In terms of assembly, homotetramer. Interacts with PRMT3; the interaction is direct, inhibits ALDH1A1 aldehyde dehydrogenase activity and is independent of the methyltransferase activity of PRMT3. Post-translationally, the N-terminus is blocked most probably by acetylation. In terms of tissue distribution, expressed in retina. Expressed in lens and cornea (at protein level). Expressed by midbrain dopamine neurons.

The protein localises to the cytoplasm. The protein resides in the cytosol. It is found in the cell projection. It localises to the axon. It carries out the reaction an aldehyde + NAD(+) + H2O = a carboxylate + NADH + 2 H(+). The enzyme catalyses all-trans-retinal + NAD(+) + H2O = all-trans-retinoate + NADH + 2 H(+). It catalyses the reaction 9-cis-retinal + NAD(+) + H2O = 9-cis-retinoate + NADH + 2 H(+). The catalysed reaction is 11-cis-retinal + NAD(+) + H2O = 11-cis-retinoate + NADH + 2 H(+). It carries out the reaction 13-cis-retinal + NAD(+) + H2O = 13-cis-retinoate + NADH + 2 H(+). The enzyme catalyses 4-aminobutanal + NAD(+) + H2O = 4-aminobutanoate + NADH + 2 H(+). It catalyses the reaction 3-deoxyglucosone + NAD(+) + H2O = 2-dehydro-3-deoxy-D-gluconate + NADH + 2 H(+). The catalysed reaction is (E)-4-hydroxynon-2-enal + NAD(+) + H2O = (E)-4-hydroxynon-2-enoate + NADH + 2 H(+). It carries out the reaction malonaldehyde + NAD(+) + H2O = 3-oxopropanoate + NADH + 2 H(+). The enzyme catalyses hexanal + NAD(+) + H2O = hexanoate + NADH + 2 H(+). It catalyses the reaction propanal + NAD(+) + H2O = propanoate + NADH + 2 H(+). The catalysed reaction is acetaldehyde + NAD(+) + H2O = acetate + NADH + 2 H(+). It carries out the reaction benzaldehyde + NAD(+) + H2O = benzoate + NADH + 2 H(+). It participates in cofactor metabolism; retinol metabolism. With respect to regulation, the aminobutyraldehyde dehydrogenase activity is negatively regulated by ethanol in vivo. Its function is as follows. Cytosolic dehydrogenase that catalyzes the irreversible oxidation of a wide range of aldehydes to their corresponding carboxylic acid. Functions downstream of retinol dehydrogenases and catalyzes the oxidation of retinaldehyde into retinoic acid, the second step in the oxidation of retinol/vitamin A into retinoic acid. This pathway is crucial to control the levels of retinol and retinoic acid, two important molecules which excess can be teratogenic and cytotoxic. Also oxidizes aldehydes resulting from lipid peroxidation like (E)-4-hydroxynon-2-enal/HNE, malonaldehyde and hexanal that form protein adducts and are highly cytotoxic. By participating for instance to the clearance of (E)-4-hydroxynon-2-enal/HNE in the lens epithelium prevents the formation of HNE-protein adducts and lens opacification. Also functions downstream of fructosamine-3-kinase in the fructosamine degradation pathway by catalyzing the oxidation of 3-deoxyglucosone, the carbohydrate product of fructosamine 3-phosphate decomposition, which is itself a potent glycating agent that may react with lysine and arginine side-chains of proteins. Also has an aminobutyraldehyde dehydrogenase activity and is probably part of an alternative pathway for the biosynthesis of GABA/4-aminobutanoate in midbrain, thereby playing a role in GABAergic synaptic transmission. In Mus musculus (Mouse), this protein is Aldehyde dehydrogenase 1A1.